The primary structure comprises 188 residues: Pupal cuticle protein Edg-84A (188 aa).

A signal peptide spans methionine 1–alanine 17. The segment at proline 19 to tyrosine 67 is disordered. A compositionally biased stretch (polar residues) spans serine 24–tyrosine 41. Residues histidine 34–serine 100 enclose the Chitin-binding type R&amp;R domain. Positions glycine 49–valine 62 are enriched in basic and acidic residues.

Imaginal (anterior) epidermis.

Component of the cuticle of the pupa of fruit fly. The polypeptide is Pupal cuticle protein Edg-84A (Edg84A) (Drosophila melanogaster (Fruit fly)).